The chain runs to 337 residues: tRNA N6-adenosine threonylcarbamoyltransferase (337 aa).

Positions 111 and 115 each coordinate Fe cation. Residues 134–138, aspartate 167, glycine 180, and asparagine 272 contribute to the substrate site; that span reads LVSGG. A Fe cation-binding site is contributed by aspartate 300.

This sequence belongs to the KAE1 / TsaD family. Fe(2+) serves as cofactor.

The protein resides in the cytoplasm. It carries out the reaction L-threonylcarbamoyladenylate + adenosine(37) in tRNA = N(6)-L-threonylcarbamoyladenosine(37) in tRNA + AMP + H(+). Functionally, required for the formation of a threonylcarbamoyl group on adenosine at position 37 (t(6)A37) in tRNAs that read codons beginning with adenine. Is involved in the transfer of the threonylcarbamoyl moiety of threonylcarbamoyl-AMP (TC-AMP) to the N6 group of A37, together with TsaE and TsaB. TsaD likely plays a direct catalytic role in this reaction. In Salmonella agona (strain SL483), this protein is tRNA N6-adenosine threonylcarbamoyltransferase.